The sequence spans 425 residues: Serine--tRNA ligase (425 aa).

Position 233–235 (233–235 (TAE)) interacts with L-serine. Residue 264 to 266 (RAE) participates in ATP binding. Residue glutamate 287 coordinates L-serine. 351–354 (EISS) contributes to the ATP binding site. Serine 387 serves as a coordination point for L-serine.

The protein belongs to the class-II aminoacyl-tRNA synthetase family. Type-1 seryl-tRNA synthetase subfamily. As to quaternary structure, homodimer. The tRNA molecule binds across the dimer.

It is found in the cytoplasm. It carries out the reaction tRNA(Ser) + L-serine + ATP = L-seryl-tRNA(Ser) + AMP + diphosphate + H(+). The catalysed reaction is tRNA(Sec) + L-serine + ATP = L-seryl-tRNA(Sec) + AMP + diphosphate + H(+). It participates in aminoacyl-tRNA biosynthesis; selenocysteinyl-tRNA(Sec) biosynthesis; L-seryl-tRNA(Sec) from L-serine and tRNA(Sec): step 1/1. Its function is as follows. Catalyzes the attachment of serine to tRNA(Ser). Is also able to aminoacylate tRNA(Sec) with serine, to form the misacylated tRNA L-seryl-tRNA(Sec), which will be further converted into selenocysteinyl-tRNA(Sec). The sequence is that of Serine--tRNA ligase from Clostridium perfringens (strain 13 / Type A).